We begin with the raw amino-acid sequence, 364 residues long: Uroporphyrinogen decarboxylase (364 aa).

Positions 34, 36, 38, 47, 83, 161, 216, and 336 each coordinate coproporphyrinogen I. Coproporphyrinogen III is bound by residues R34, A36, and R38. Residues D83, Y161, S216, and H336 each coordinate coproporphyrinogen III.

Belongs to the uroporphyrinogen decarboxylase family. As to quaternary structure, homodimer.

It is found in the cytoplasm. It localises to the cytosol. It catalyses the reaction uroporphyrinogen III + 4 H(+) = coproporphyrinogen III + 4 CO2. It carries out the reaction uroporphyrinogen I + 4 H(+) = coproporphyrinogen I + 4 CO2. It participates in porphyrin-containing compound metabolism; protoporphyrin-IX biosynthesis; coproporphyrinogen-III from 5-aminolevulinate: step 4/4. Functionally, catalyzes the sequential decarboxylation of the four acetate side chains of uroporphyrinogen to form coproporphyrinogen and participates in the fifth step in the heme biosynthetic pathway. Isomer I or isomer III of uroporphyrinogen may serve as substrate, but only coproporphyrinogen III can ultimately be converted to heme. In vitro also decarboxylates pentacarboxylate porphyrinogen I. The protein is Uroporphyrinogen decarboxylase of Rattus norvegicus (Rat).